The following is a 460-amino-acid chain: MFEKYPGKMEGLFRHNPYTAFPPAVPGLPPGLPPAVSFGSLQGAFQPKSTNPELPPRLGPVPSGLSQKGTQIPDHFRPPLRKPGKWCAMHVRVAYMILRHQEKMKGDSHKLDFRNDLLPCLPGPYGALPPGQELSHPASLFTATGAVHAAANPFTAAPGAHGPFLSPSTHIDPFGRPTSFASLAALSNGAFGGLGSPTFNSGAVFAQKESPGAPPAFASPPDPWGRLHRSPLTFPAWVRPPEAARTPGSDKERPVERREPSITKEEKDRDLPFSRPQLRVSPATPKARAGEEGPRPTKESVRVKEERKEEAAAAAAAAAAAAAAAAAAATGPQGLHLLFERPRPPPFLGPSPPDRCAGFLEPTWLAAPPRLARPPRFYEAGEELTGPGAVAAARLYGLEPAHPLLYSRLAPPPPPAAAPGTPHLLSKTPPGALLGAPPPLVPAPRPSSPPRGPGPARADR.

A Glycyl lysine isopeptide (Lys-Gly) (interchain with G-Cter in SUMO2) cross-link involves residue Lys8. Disordered regions lie at residues 40–79 (SLQG…FRPP), 205–311 (FAQK…KEEA), and 406–460 (YSRL…RADR). The segment covering 212-223 (GAPPAFASPPDP) has biased composition (pro residues). Asymmetric dimethylarginine is present on residues Arg229 and Arg239. Basic and acidic residues predominate over residues 248–272 (GSDKERPVERREPSITKEEKDRDLP). Residue Ser281 is modified to Phosphoserine. Over residues 288–311 (RAGEEGPRPTKESVRVKEERKEEA) the composition is skewed to basic and acidic residues. The segment covering 436–453 (APPPLVPAPRPSSPPRGP) has biased composition (pro residues).

This is Probable fibrosin-1 (FBRS) from Homo sapiens (Human).